A 349-amino-acid chain; its full sequence is Succinylglutamate desuccinylase (349 aa).

Positions 70, 73, and 166 each coordinate Zn(2+). Residue Glu229 is part of the active site.

It belongs to the AspA/AstE family. Succinylglutamate desuccinylase subfamily. Zn(2+) is required as a cofactor.

It catalyses the reaction N-succinyl-L-glutamate + H2O = L-glutamate + succinate. It participates in amino-acid degradation; L-arginine degradation via AST pathway; L-glutamate and succinate from L-arginine: step 5/5. In terms of biological role, transforms N(2)-succinylglutamate into succinate and glutamate. The chain is Succinylglutamate desuccinylase from Burkholderia mallei (strain ATCC 23344).